A 370-amino-acid chain; its full sequence is MTTQKQHQQQHHLQSGQEKNKALTLIICVCGLYGTFLTWSILQERINTKPYGDNNEYFKAPIIINLIQALFASIIGFIYNYVTTTTTSTKTTTKTKTKTNSNPFSIFFTNGKQNCNVLKFMILISITSSIASPIGYKSLKHLDYLAYLLAKSCKLIPVMIVHFIFYQTKFPNYKYLVAGLVTLGVILFTMAHVTTKTKINDGNTLLGLTYLIGSMILDGLTNSTQDQLFKLPLENKLTSGKLMSLLNLFIFIWTSLYTIIFHKYEIDYTINFINNYPELLIDIIGFAICGAIGQVFIFIILEKFDSIILITATVTRKMLSMILSVILFGHHLSWEQWVGVGLVFGGIGLEAFIKFKQQSQQKMKIKSKVA.

The next 10 helical transmembrane spans lie at 22 to 42 (ALTL…WSIL), 62 to 82 (IIIN…YNYV), 115 to 135 (CNVL…SPIG), 145 to 165 (LAYL…HFIF), 175 to 195 (YLVA…HVTT), 204 to 224 (TLLG…TNST), 242 to 262 (LMSL…IIFH), 280 to 300 (LIDI…IFII), 307 to 327 (IILI…SVIL), and 333 to 353 (SWEQ…EAFI).

Belongs to the nucleotide-sugar transporter family. SLC35B subfamily.

The protein resides in the endoplasmic reticulum membrane. Functionally, may be involved in specific transport of UDP-Gal from the cytosol to the Golgi lumen. Involved in the maintenance of optimal conditions for the folding of secretory pathway proteins in the endoplasmic reticulum. This chain is UDP-galactose transporter homolog 1 (HUT1), found in Candida albicans (strain SC5314 / ATCC MYA-2876) (Yeast).